Consider the following 148-residue polypeptide: Large ribosomal subunit protein uL15 (148 aa).

The interval 1–50 (MNLSNLKPAEGSTKTRKRIGRGPGSGLGGTSTRGHKGAKSRSGYSKKIGF) is disordered. Residues 21 to 31 (RGPGSGLGGTS) show a composition bias toward gly residues.

It belongs to the universal ribosomal protein uL15 family. Part of the 50S ribosomal subunit.

In terms of biological role, binds to the 23S rRNA. The chain is Large ribosomal subunit protein uL15 from Bacteroides fragilis (strain ATCC 25285 / DSM 2151 / CCUG 4856 / JCM 11019 / LMG 10263 / NCTC 9343 / Onslow / VPI 2553 / EN-2).